We begin with the raw amino-acid sequence, 100 residues long: Ubiquinol-cytochrome-C reductase complex subunit IX, mitochondrial (100 aa).

The N-terminal 30 residues, 1 to 30, are a transit peptide targeting the mitochondrion; sequence MQTHVRRVALQALRPCLRAGLMAPKFPVRF. A helical transmembrane segment spans residues 66 to 86; it reads LLMRLFFAFVAYVVAMKVFGA.

In terms of assembly, plants bc1 complex contains 10 subunits; 3 respiratory subunits, 2 core proteins and 5 low-molecular weight proteins.

The protein resides in the mitochondrion inner membrane. Its function is as follows. This is a component of the ubiquinol-cytochrome c reductase complex (complex III or cytochrome b-c1 complex), which is part of the mitochondrial respiratory chain. This Euglena gracilis protein is Ubiquinol-cytochrome-C reductase complex subunit IX, mitochondrial.